A 958-amino-acid polypeptide reads, in one-letter code: Translation initiation factor IF-2 (958 aa).

Residues 50 to 67 show a composition bias toward low complexity; sequence FKPAAAPKVEAKPAAPKV. 2 disordered regions span residues 50-224 and 288-374; these read FKPA…RIDF and EVVP…HELP. Basic and acidic residues-rich tracts occupy residues 68–89, 96–118, and 138–153; these read SAEKKAEKSEPAKPAVAKEEAK, SAEKKAEKSEPVKPAVAKEEAKP, and FKAEREARAKEQAERR. Positions 157–169 are enriched in low complexity; the sequence is KGNNRDQQQNGNR. Basic and acidic residues-rich tracts occupy residues 185-195 and 290-323; these read RDNRRFNDQAK and VPEKKEPAVDTRRKKQARPDKNRDDYDHEEDGPR. Residues 337-346 are compositionally biased toward low complexity; that stretch reads NQKNSNWNNN. Residues 365–374 are compositionally biased toward basic and acidic residues; that stretch reads VTERKFHELP. Residues 460 to 627 enclose the tr-type G domain; that stretch reads ERPPVVTIMG…TVLLVAEIQE (168 aa). Positions 469–476 are G1; it reads GHVDHGKT. 469 to 476 serves as a coordination point for GTP; the sequence is GHVDHGKT. Residues 494–498 are G2; sequence GITQH. Residues 515 to 518 form a G3 region; it reads DTPG. GTP contacts are provided by residues 515 to 519 and 569 to 572; these read DTPGH and NKID. Residues 569–572 are G4; the sequence is NKID. The segment at 605 to 607 is G5; it reads SAK.

The protein belongs to the TRAFAC class translation factor GTPase superfamily. Classic translation factor GTPase family. IF-2 subfamily.

The protein resides in the cytoplasm. In terms of biological role, one of the essential components for the initiation of protein synthesis. Protects formylmethionyl-tRNA from spontaneous hydrolysis and promotes its binding to the 30S ribosomal subunits. Also involved in the hydrolysis of GTP during the formation of the 70S ribosomal complex. The sequence is that of Translation initiation factor IF-2 from Streptococcus pneumoniae serotype 4 (strain ATCC BAA-334 / TIGR4).